The sequence spans 141 residues: MPPKFKRHLNDDDVTGSVKSERRNLLEDDSDEEEDFFLRGPSGPRFGPRNDKIKHVQNQVDEVIDVMQENITKVIERGERLDELQDKSESLSDNATAFSNRSKQLRRQMWWRGCKIKAIMALVAVILLLVIIILIVVKYRT.

The segment at 1 to 51 (MPPKFKRHLNDDDVTGSVKSERRNLLEDDSDEEEDFFLRGPSGPRFGPRND) is disordered. Over 1–115 (MPPKFKRHLN…RRQMWWRGCK (115 aa)) the chain is Cytoplasmic. Residues Ser-17 and Ser-30 each carry the phosphoserine modification. A v-SNARE coiled-coil homology domain is found at 52–112 (KIKHVQNQVD…KQLRRQMWWR (61 aa)). The chain crosses the membrane as a helical; Anchor for type IV membrane protein span at residues 116–136 (IKAIMALVAVILLLVIIILIV). The Vesicular portion of the chain corresponds to 137 to 141 (VKYRT).

This sequence belongs to the synaptobrevin family. As to quaternary structure, identified in a complex containing STX6, STX12, VAMP4 and VTI1A. Interacts with BAIAP3; this interaction is increased in the presence of calcium.

It is found in the golgi apparatus. It localises to the trans-Golgi network membrane. Functionally, involved in the pathway that functions to remove an inhibitor (probably synaptotagmin-4) of calcium-triggered exocytosis during the maturation of secretory granules. May be a marker for this sorting pathway that is critical for remodeling the secretory response of granule. The chain is Vesicle-associated membrane protein 4 (VAMP4) from Bos taurus (Bovine).